Reading from the N-terminus, the 142-residue chain is Hemoglobin subunit alpha-4 (142 aa).

In terms of domain architecture, Globin spans 2 to 142 (VLSAADKSNV…VSTVLTSKYR (141 aa)). H59 provides a ligand contact to O2. A heme b-binding site is contributed by H88.

Belongs to the globin family. As to quaternary structure, heterotetramer of two alpha chains and two beta chains. In terms of tissue distribution, red blood cells.

Its function is as follows. Involved in oxygen transport from the lung to the various peripheral tissues. In Bubalus bubalis (Domestic water buffalo), this protein is Hemoglobin subunit alpha-4.